A 208-amino-acid chain; its full sequence is uncharacterized protein (208 aa).

2 disordered regions span residues 1–78 and 154–208; these read MDLF…SPTE and RRRS…PRNY. Residues 40 to 51 are compositionally biased toward basic residues; sequence KNHKKAQPRRTT. The span at 179–197 shows a compositional bias: polar residues; the sequence is ANSSSPNPTATGSETSYGS.

This is an uncharacterized protein from Caenorhabditis elegans.